A 337-amino-acid polypeptide reads, in one-letter code: Heme A synthase (337 aa).

5 helical membrane passes run 6–26 (ITKWLCISCIMVIATIVIGGI), 87–107 (FIHRLLGRITALIYIVPLIYF), 119–139 (LPYIIALWLFCVQGFMGWYMV), 154–174 (LAFHLIIAVIIYHILFYQLIK), and 192–212 (LIFSGIAITVVYVQIFLGALV). Residue H256 coordinates heme. 3 helical membrane-spanning segments follow: residues 258–278 (LGGYSVFLVVVVLIICLLKIE), 285–305 (IAYFLMIALLMQVSTGIITLL), and 308–328 (VPIIIASIHQLFAVILLSIII). Residue H316 coordinates heme.

The protein belongs to the COX15/CtaA family. Type 2 subfamily. As to quaternary structure, interacts with CtaB. It depends on heme b as a cofactor.

It is found in the cell membrane. The enzyme catalyses Fe(II)-heme o + 2 A + H2O = Fe(II)-heme a + 2 AH2. The protein operates within porphyrin-containing compound metabolism; heme A biosynthesis; heme A from heme O: step 1/1. In terms of biological role, catalyzes the conversion of heme O to heme A by two successive hydroxylations of the methyl group at C8. The first hydroxylation forms heme I, the second hydroxylation results in an unstable dihydroxymethyl group, which spontaneously dehydrates, resulting in the formyl group of heme A. The polypeptide is Heme A synthase (Rickettsia massiliae (strain Mtu5)).